A 193-amino-acid polypeptide reads, in one-letter code: Bcl-2-like protein 2 (193 aa).

Alanine 2 is modified (N-acetylalanine). The BH4 signature appears at 9 to 29 (DTRALVADFVGYKLRQKGYVC). The short motif at 85 to 104 (ELFQGGPNWGRLVAFFVFGA) is the BH1 element. The BH2 motif lies at 136–151 (DWIHSSGGWAEFTALY). Phosphoserine is present on alanine 177.

It belongs to the Bcl-2 family. Interacts with HIF3A (via C-terminus domain). Interacts with BOP. As to expression, expressed (at protein level) in a wide range of tissues with highest levels in brain, spinal cord, testis, pancreas, heart, spleen and mammary glands. Moderate levels found in thymus, ovary and small intestine. Not detected in salivary gland, muscle or liver. Also expressed in cell lines of myeloid, fibroblast and epithelial origin. Not detected in most lymphoid cell lines.

The protein resides in the mitochondrion membrane. In terms of biological role, promotes cell survival. Blocks dexamethasone-induced apoptosis. Mediates survival of postmitotic Sertoli cells by suppressing death-promoting activity of BAX. The sequence is that of Bcl-2-like protein 2 (BCL2L2) from Homo sapiens (Human).